The sequence spans 275 residues: Large ribosomal subunit protein uL2 (275 aa).

2 disordered regions span residues 1–24 and 208–275; these read MGIRSFRPYTPGTRQATVSDFSEI and AGRT…RRRR. Residues 12–22 are compositionally biased toward polar residues; sequence GTRQATVSDFS. 2 stretches are compositionally biased toward basic residues: residues 208-219 and 255-275; these read AGRTRHLGRRPQ and LGKKTRKKKKQSSSLIVRRRR.

It belongs to the universal ribosomal protein uL2 family. In terms of assembly, part of the 50S ribosomal subunit. Forms a bridge to the 30S subunit in the 70S ribosome.

In terms of biological role, one of the primary rRNA binding proteins. Required for association of the 30S and 50S subunits to form the 70S ribosome, for tRNA binding and peptide bond formation. It has been suggested to have peptidyltransferase activity; this is somewhat controversial. Makes several contacts with the 16S rRNA in the 70S ribosome. This is Large ribosomal subunit protein uL2 from Picosynechococcus sp. (strain ATCC 27264 / PCC 7002 / PR-6) (Agmenellum quadruplicatum).